Consider the following 122-residue polypeptide: Small ribosomal subunit protein bS16 (122 aa).

Residues 81–122 (GLMKRDAKNNPKKGEPGEKAKERAKERAEKAAAGSTEDAAAE) form a disordered region. Over residues 83–110 (MKRDAKNNPKKGEPGEKAKERAKERAEK) the composition is skewed to basic and acidic residues. Positions 111 to 122 (AAAGSTEDAAAE) are enriched in low complexity.

This sequence belongs to the bacterial ribosomal protein bS16 family.

The polypeptide is Small ribosomal subunit protein bS16 (Xanthobacter autotrophicus (strain ATCC BAA-1158 / Py2)).